We begin with the raw amino-acid sequence, 214 residues long: Adenylate kinase (214 aa).

An ATP-binding site is contributed by 10-15; that stretch reads GAGKGT. Positions 30-59 are NMP; that stretch reads STGDMLRAAVKAGTPLGLEAKKVMDAGQLV. AMP-binding positions include Thr-31, Arg-36, 57-59, 85-88, and Gln-92; these read QLV and GFPR. Positions 122 to 159 are LID; that stretch reads GRRVHPGSGRVYHIVFNQPKVEGKDDVTGEDLAIRPDD. ATP contacts are provided by residues Arg-123 and 132-133; that span reads VY. AMP contacts are provided by Arg-156 and Arg-167. Gln-200 is a binding site for ATP.

The protein belongs to the adenylate kinase family. In terms of assembly, monomer.

Its subcellular location is the cytoplasm. The enzyme catalyses AMP + ATP = 2 ADP. It functions in the pathway purine metabolism; AMP biosynthesis via salvage pathway; AMP from ADP: step 1/1. Its function is as follows. Catalyzes the reversible transfer of the terminal phosphate group between ATP and AMP. Plays an important role in cellular energy homeostasis and in adenine nucleotide metabolism. This Shewanella woodyi (strain ATCC 51908 / MS32) protein is Adenylate kinase.